The following is a 69-amino-acid chain: uncharacterized protein (69 aa).

The segment at 23–46 is disordered; that stretch reads AENEGNRKENRRQMQSRNERGCNV. Over residues 26 to 44 the composition is skewed to basic and acidic residues; the sequence is EGNRKENRRQMQSRNERGC.

This is an uncharacterized protein from Homo sapiens (Human).